Here is a 72-residue protein sequence, read N- to C-terminus: Conotoxin 3 (72 aa).

The signal sequence occupies residues 1–22; that stretch reads MKLTCVVIVAVLLLTACQLITA. A propeptide spanning residues 23–46 is cleaved from the precursor; the sequence is DDSRGTQEHRALRSDTKLSMLTLR. 3 disulfide bridges follow: C47–C61, C54–C64, and C60–C71.

The protein belongs to the conotoxin O1 superfamily. As to expression, expressed by the venom duct.

The protein localises to the secreted. The polypeptide is Conotoxin 3 (Conus striatus (Striated cone)).